The following is a 530-amino-acid chain: MEDDSLYLRGEWQFNHFSKLTSSRPDAAFAEIQRTSLPEKSPLSCETRVDLCDDLAPVARQLAPREKLPLSSRRPAAVGAGLQNMGNTCYVNASLQCLTYTPPLANYMLSREHSQTCHRHKGCMLCTMQAHITRALHNPGHVIQPSQALAAGFHRGKQEDAHEFLMFTVDAMKKACLPGHKQVDHHSKDTTLIHQIFGGYWRSQIKCLHCHGISDTFDPYLDIALDIQAAQSVQQALEQLVKPEELNGENAYHCGVCLQRAPASKTLTLHTSAKVLILVLKRFSDVTGNKIAKNVQYPECLDMQPYMSQPNTGPLVYVLYAVLVHAGWSCHNGHYFSYVKAQEGQWYKMDDAEVTASSITSVLSQQAYVLFYIQKSEWERHSESVSRGREPRALGAEDTDRRATQGELKRDHPCLQAPELDEHLVERATQESTLDHWKFLQEQNKTKPEFNVRKVEGTLPPDVLVIHQSKYKCGMKNHHPEQQSSLLNLSSSTPTHQESMNTGTLASLRGRARRSKGKNKHSKRALLVCQ.

A USP domain is found at 80 to 375; it reads AGLQNMGNTC…QAYVLFYIQK (296 aa). Residue Cys-89 is the Nucleophile of the active site. The active-site Proton acceptor is the His-334. 2 stretches are compositionally biased toward basic and acidic residues: residues 382 to 392 and 398 to 412; these read SESVSRGREPR and DTDRRATQGELKRDH. Disordered regions lie at residues 382 to 412 and 477 to 530; these read SESVSRGREPRALGAEDTDRRATQGELKRDH and NHHP…LVCQ. Residues 493–505 are compositionally biased toward polar residues; the sequence is TPTHQESMNTGTL. The span at 510–524 shows a compositional bias: basic residues; sequence GRARRSKGKNKHSKR.

The protein belongs to the peptidase C19 family. USP17 subfamily. Expressed in heart, brain, liver and skeletal muscle.

The protein resides in the nucleus. Its subcellular location is the nucleolus. It localises to the endoplasmic reticulum. The catalysed reaction is Thiol-dependent hydrolysis of ester, thioester, amide, peptide and isopeptide bonds formed by the C-terminal Gly of ubiquitin (a 76-residue protein attached to proteins as an intracellular targeting signal).. Its function is as follows. Deubiquitinating enzyme that removes conjugated ubiquitin from specific proteins to regulate different cellular processes that may include cell proliferation, progression through the cell cycle, apoptosis, cell migration, and the cellular response to viral infection. This Homo sapiens (Human) protein is Ubiquitin carboxyl-terminal hydrolase 17-like protein 24 (USP17L24).